We begin with the raw amino-acid sequence, 70 residues long: Brevinin-1CG3 (70 aa).

Residues 1–22 (MFTLKKSLLLLFFLGTINLSLC) form the signal peptide. Residues 23-44 (EQERNAEEERRDDSDKRDVEVE) constitute a propeptide, removed in mature form. A disulfide bond links Cys-64 and Cys-70.

This sequence belongs to the frog skin active peptide (FSAP) family. Brevinin subfamily. As to expression, expressed by the skin glands.

It localises to the secreted. In terms of biological role, antimicrobial peptide active against a variety of Gram-positive and some Gram-negative bacterial strains. Has antifungal activity against a slime mold isolate. Has hemolytic activity against human erythrocytes. This is Brevinin-1CG3 from Amolops chunganensis (Chungan torrent frog).